A 155-amino-acid polypeptide reads, in one-letter code: UPF0178 protein ACIAD2644 (155 aa).

The segment at 120-155 (GAGVQTGGPPPISERDKREFSSALDQTILKQKRKTA) is disordered.

This sequence belongs to the UPF0178 family.

This chain is UPF0178 protein ACIAD2644, found in Acinetobacter baylyi (strain ATCC 33305 / BD413 / ADP1).